The sequence spans 292 residues: 4-hydroxy-tetrahydrodipicolinate synthase (292 aa).

Residue threonine 44 participates in pyruvate binding. The Proton donor/acceptor role is filled by tyrosine 132. Catalysis depends on lysine 160, which acts as the Schiff-base intermediate with substrate. Position 202 (isoleucine 202) interacts with pyruvate.

Belongs to the DapA family. Homotetramer; dimer of dimers.

It localises to the cytoplasm. The catalysed reaction is L-aspartate 4-semialdehyde + pyruvate = (2S,4S)-4-hydroxy-2,3,4,5-tetrahydrodipicolinate + H2O + H(+). The protein operates within amino-acid biosynthesis; L-lysine biosynthesis via DAP pathway; (S)-tetrahydrodipicolinate from L-aspartate: step 3/4. Its function is as follows. Catalyzes the condensation of (S)-aspartate-beta-semialdehyde [(S)-ASA] and pyruvate to 4-hydroxy-tetrahydrodipicolinate (HTPA). This Magnetococcus marinus (strain ATCC BAA-1437 / JCM 17883 / MC-1) protein is 4-hydroxy-tetrahydrodipicolinate synthase.